We begin with the raw amino-acid sequence, 502 residues long: MTLAYDDALEILKSQLQSFETDIKMEEVGVVYAVGDGVARAYGLDNVMANELLEFDSGEAGLAFNLEEDNVGIIILGSESGIKEGSIVKRTGRILDAPVGEELVGRVIDPLGNPLDGKGPINAKHRSPVEKIAPGIVKRKSVHEPLQTGIKAIDAMIPIGRGQRELIIGDRATGKTTVAIDTILNQKDTDVYCIYVAIGQKKSTTARIIELLEREGAMKYTTVVVASATDPAPLQYLAPFTGCTIGEYFRDNGKHALIVYDDLSKHAEAYRQLSLLVRRPPGREAYPGDVFYLHSRLLERAAKLYDELGAGSLTALPIIETKAGDVSAYIPTNVISITDGQIYLEPDLFNKGIRPAINVGLSVSRVGGSAQIKAMKQVAGTLRLDLAQFRELEAFMQFASDLDKATQDTINRGLRLVELLKQGPYSPIPVEKQVIAIYAGTNGYLDDIPVSSVRKFEMELYGFLDANFKDLLDELKTKKAIDDSVKSKLKTALDKFKASFIP.

169–176 (GDRATGKT) provides a ligand contact to ATP.

Belongs to the ATPase alpha/beta chains family. F-type ATPases have 2 components, CF(1) - the catalytic core - and CF(0) - the membrane proton channel. CF(1) has five subunits: alpha(3), beta(3), gamma(1), delta(1), epsilon(1). CF(0) has three main subunits: a(1), b(2) and c(9-12). The alpha and beta chains form an alternating ring which encloses part of the gamma chain. CF(1) is attached to CF(0) by a central stalk formed by the gamma and epsilon chains, while a peripheral stalk is formed by the delta and b chains.

It is found in the cell inner membrane. The catalysed reaction is ATP + H2O + 4 H(+)(in) = ADP + phosphate + 5 H(+)(out). In terms of biological role, produces ATP from ADP in the presence of a proton gradient across the membrane. The alpha chain is a regulatory subunit. This chain is ATP synthase subunit alpha, found in Hydrogenobaculum sp. (strain Y04AAS1).